A 987-amino-acid polypeptide reads, in one-letter code: SNF2 domain-containing protein ENL1 (987 aa).

2 disordered regions span residues 1 to 172 (MASP…AYGG) and 224 to 245 (FGDY…ENHA). 2 stretches are compositionally biased toward pro residues: residues 18-27 (TPPAPTPLAA) and 51-71 (NPNP…PQEP). Residues 99-110 (DSIRDILDDLTT) show a composition bias toward basic and acidic residues. The span at 141 to 156 (PSQSQLNDGTKPSSSF) shows a compositional bias: polar residues. The segment covering 226–237 (DYDDEDDIDQDA) has biased composition (acidic residues). Residues 292–466 (WVLHCRGTGG…WALFYFCCPE (175 aa)) enclose the Helicase ATP-binding domain. 305-312 (DDMGLGKT) is an ATP binding site. Residues 417–420 (DEGH) carry the DEAH box motif. Residues 645-801 (SLLQNLVSEG…TRYFSKRDIQ (157 aa)) enclose the Helicase C-terminal domain.

The protein belongs to the SNF2/RAD54 helicase family. In terms of tissue distribution, expressed in ovaries, roots, shoots and leaves.

It localises to the cytoplasm. The protein resides in the chromosome. In terms of biological role, DNA helicase that acts as an essential component of the spindle assembly checkpoint. Plays an indispensable role in the development of seed endosperm. Is required to secure sister chromosome separation during endosperm syncytial mitosis, which involves extremely rapid free nuclear cycles. The chain is SNF2 domain-containing protein ENL1 from Oryza sativa subsp. japonica (Rice).